A 492-amino-acid polypeptide reads, in one-letter code: Bifunctional purine biosynthesis protein PurH (492 aa).

The region spanning 1–144 (MKKAILSVSN…KNFKHVTTIV (144 aa)) is the MGS-like domain.

This sequence belongs to the PurH family.

It catalyses the reaction (6R)-10-formyltetrahydrofolate + 5-amino-1-(5-phospho-beta-D-ribosyl)imidazole-4-carboxamide = 5-formamido-1-(5-phospho-D-ribosyl)imidazole-4-carboxamide + (6S)-5,6,7,8-tetrahydrofolate. The enzyme catalyses IMP + H2O = 5-formamido-1-(5-phospho-D-ribosyl)imidazole-4-carboxamide. Its pathway is purine metabolism; IMP biosynthesis via de novo pathway; 5-formamido-1-(5-phospho-D-ribosyl)imidazole-4-carboxamide from 5-amino-1-(5-phospho-D-ribosyl)imidazole-4-carboxamide (10-formyl THF route): step 1/1. It participates in purine metabolism; IMP biosynthesis via de novo pathway; IMP from 5-formamido-1-(5-phospho-D-ribosyl)imidazole-4-carboxamide: step 1/1. In Staphylococcus haemolyticus (strain JCSC1435), this protein is Bifunctional purine biosynthesis protein PurH.